The sequence spans 125 residues: Small ribosomal subunit protein uS13 (125 aa).

Residues 99–125 (RGQRTKTNARTRKGKRKTVANKKMAAK) form a disordered region.

It belongs to the universal ribosomal protein uS13 family. As to quaternary structure, part of the 30S ribosomal subunit. Forms a loose heterodimer with protein S19. Forms two bridges to the 50S subunit in the 70S ribosome.

Functionally, located at the top of the head of the 30S subunit, it contacts several helices of the 16S rRNA. In the 70S ribosome it contacts the 23S rRNA (bridge B1a) and protein L5 of the 50S subunit (bridge B1b), connecting the 2 subunits; these bridges are implicated in subunit movement. Contacts the tRNAs in the A and P-sites. The sequence is that of Small ribosomal subunit protein uS13 from Borrelia turicatae (strain 91E135).